A 427-amino-acid polypeptide reads, in one-letter code: Gamma-glutamyl phosphate reductase (427 aa).

It belongs to the gamma-glutamyl phosphate reductase family.

It is found in the cytoplasm. The enzyme catalyses L-glutamate 5-semialdehyde + phosphate + NADP(+) = L-glutamyl 5-phosphate + NADPH + H(+). The protein operates within amino-acid biosynthesis; L-proline biosynthesis; L-glutamate 5-semialdehyde from L-glutamate: step 2/2. Its function is as follows. Catalyzes the NADPH-dependent reduction of L-glutamate 5-phosphate into L-glutamate 5-semialdehyde and phosphate. The product spontaneously undergoes cyclization to form 1-pyrroline-5-carboxylate. This chain is Gamma-glutamyl phosphate reductase, found in Sinorhizobium medicae (strain WSM419) (Ensifer medicae).